We begin with the raw amino-acid sequence, 346 residues long: Sensor histidine kinase GraS (346 aa).

2 helical membrane passes run 15–35 (MNWI…SLID) and 43–63 (LFYI…LTYF). Residues 126–332 (EFVHDIKTPV…TVRLIFPLQN (207 aa)) enclose the Histidine kinase domain.

In terms of assembly, interacts with GraX.

The protein resides in the cell membrane. It carries out the reaction ATP + protein L-histidine = ADP + protein N-phospho-L-histidine.. In terms of biological role, member of the two-component regulatory system GraR/GraS involved in resistance against cationic antimicrobial peptides (CAMPs). Functions as a sensor protein kinase which phosphorylates GraR through the auxiliary protein GraX. In turn, GraR up-regulates many genes such as adhesins, exoproteins, transporters, toxins, and proteins involved in cell wall synthesis. Down-regulates the expression of many genes involved in RNA and amino acid synthesis or glycolysis. The chain is Sensor histidine kinase GraS (graS) from Staphylococcus aureus (strain COL).